The following is a 317-amino-acid chain: D-aminoacyl-tRNA deacylase (317 aa).

Belongs to the DtdA deacylase family. Requires Zn(2+) as cofactor. In terms of tissue distribution, ubiquitous.

Its subcellular location is the nucleus. The protein localises to the cytoplasm. The enzyme catalyses a D-aminoacyl-tRNA + H2O = a tRNA + a D-alpha-amino acid + H(+). It catalyses the reaction glycyl-tRNA(Ala) + H2O = tRNA(Ala) + glycine + H(+). In terms of biological role, hydrolyzes D-aminoacyl-tRNA into D-amino acid and free tRNA. Broad specificity toward the amino acid, but strict specificity toward the D-isomer. Seems to be required for ethanol tolerance. The protein is D-aminoacyl-tRNA deacylase (GEK1) of Arabidopsis thaliana (Mouse-ear cress).